Consider the following 939-residue polypeptide: Collagen-like protein 3 (939 aa).

4 N-linked (GlcNAc...) asparagine; by host glycosylation sites follow: Asn-15, Asn-35, Asn-39, and Asn-82. Residues 84 to 95 are compositionally biased toward low complexity; the sequence is SGSSGPSGPQGP. Disordered regions lie at residues 84-332 and 358-697; these read SGSS…DLGN and SIKG…KGEA. Collagen-like domains follow at residues 88–147, 148–207, 211–330, 364–423, 427–486, 493–552, 564–622, and 638–697; these read GPSG…NGDK, GNKG…KGDK, GNKG…SPDL, GDKG…SGAD, GDKG…KGEK, GESG…KGSK, GDKG…KGDV, and GDKG…KGEA. 13 stretches are compositionally biased toward basic and acidic residues: residues 96-110, 123-182, 189-230, 237-260, 267-288, 297-314, 360-371, 378-416, 423-491, 498-527, 537-552, 560-580, and 589-684; these read KGEKGSNGDKGDKGE, DADK…DPGI, DADK…DIGL, DADKGDKGDKGSKGDKGDKGDIGP, DADKGDKGDKGSKGDKGDKGTK, KGDKGDKGDKGIKGDKGE, KGDKGDKGDTGL, DADKGEKGDPGNKGDKGNKGDKGSKGDKGDKGDKGDTGL, DADK…DVGI, DADKGDKGEKGDKGVNGDKGDKGSKGDTGI, KGDKGSKGDKGDKGSK, KGDKGDKGDKGSKGDKGDIGI, and KGDK…DKGD. Residues Asn-788, Asn-820, Asn-858, Asn-919, and Asn-925 are each glycosylated (N-linked (GlcNAc...) asparagine; by host). Positions 896–923 are disordered; it reads NGETGAPTTDSGTNYGAGGGGGGNGTQG. A compositionally biased stretch (gly residues) spans 910 to 923; sequence YGAGGGGGGNGTQG.

In terms of processing, may be hydroxylated on lysine by the viral-encoded procollagen-lysine,2-oxoglutarate 5-dioxygenase.

Its subcellular location is the virion. Its function is as follows. May participate in the formation of a layer of cross-linked glycosylated fibrils at the viral surface thus giving it a hairy-like appearance. In Acanthamoeba polyphaga (Amoeba), this protein is Collagen-like protein 3.